Reading from the N-terminus, the 476-residue chain is Aspartyl/glutamyl-tRNA(Asn/Gln) amidotransferase subunit B (476 aa).

It belongs to the GatB/GatE family. GatB subfamily. In terms of assembly, heterotrimer of A, B and C subunits.

The catalysed reaction is L-glutamyl-tRNA(Gln) + L-glutamine + ATP + H2O = L-glutaminyl-tRNA(Gln) + L-glutamate + ADP + phosphate + H(+). It catalyses the reaction L-aspartyl-tRNA(Asn) + L-glutamine + ATP + H2O = L-asparaginyl-tRNA(Asn) + L-glutamate + ADP + phosphate + 2 H(+). In terms of biological role, allows the formation of correctly charged Asn-tRNA(Asn) or Gln-tRNA(Gln) through the transamidation of misacylated Asp-tRNA(Asn) or Glu-tRNA(Gln) in organisms which lack either or both of asparaginyl-tRNA or glutaminyl-tRNA synthetases. The reaction takes place in the presence of glutamine and ATP through an activated phospho-Asp-tRNA(Asn) or phospho-Glu-tRNA(Gln). In Bacillus pumilus (strain SAFR-032), this protein is Aspartyl/glutamyl-tRNA(Asn/Gln) amidotransferase subunit B.